The chain runs to 453 residues: Carbamoyl phosphate synthase arginine-specific small chain (453 aa).

A mitochondrion-targeting transit peptide spans 1-33 (MFSRLAARLPKASALNGVAARQVRNLSQPAITG). Positions 26-50 (LSQPAITGSKGRNMPAREPRTTAAA) are disordered. Residues Ser-97, Gly-280, and Gly-282 each contribute to the L-glutamine site. Residues 233-420 (HVALIDCGVK…MENVELFKSN (188 aa)) form the Glutamine amidotransferase type-1 domain. Residue Cys-309 is the Nucleophile of the active site. The L-glutamine site is built by Leu-310, Gln-313, Asn-351, Gly-353, and Tyr-354. Active-site residues include His-393 and Glu-395.

It belongs to the CarA family. As to quaternary structure, heterodimer composed of 2 chains; the small (or glutamine) chain promotes the hydrolysis of glutamine to ammonia, which is used by the large (or ammonia) chain to synthesize carbamoyl phosphate.

It is found in the mitochondrion matrix. The enzyme catalyses hydrogencarbonate + L-glutamine + 2 ATP + H2O = carbamoyl phosphate + L-glutamate + 2 ADP + phosphate + 2 H(+). The catalysed reaction is L-glutamine + H2O = L-glutamate + NH4(+). It functions in the pathway amino-acid biosynthesis; L-arginine biosynthesis; carbamoyl phosphate from bicarbonate: step 1/1. In terms of biological role, small subunit of the arginine-specific carbamoyl phosphate synthase (CPSase). CPSase catalyzes the formation of carbamoyl phosphate from the ammonia moiety of glutamine, carbonate, and phosphate donated by ATP, the first step of the arginine biosynthetic pathway. The small subunit (glutamine amidotransferase) binds and cleaves glutamine to supply the large subunit with the substrate ammonia. This is Carbamoyl phosphate synthase arginine-specific small chain (arg-2) from Neurospora crassa (strain ATCC 24698 / 74-OR23-1A / CBS 708.71 / DSM 1257 / FGSC 987).